The primary structure comprises 107 residues: UPF0145 protein PC1_1703 (107 aa).

The protein belongs to the UPF0145 family.

This is UPF0145 protein PC1_1703 from Pectobacterium carotovorum subsp. carotovorum (strain PC1).